Reading from the N-terminus, the 380-residue chain is GTP-binding protein 10 (380 aa).

Positions 13–148 (GNFVDNVRLY…RNIRLDLKLI (136 aa)) constitute an Obg domain. An OBG-type G domain is found at 149–344 (ADFGLVGFPN…LKSLIRQSLE (196 aa)). Residues 155 to 162 (GFPNAGKS), 202 to 206 (DLPGL), and 278 to 281 (NKMD) each bind GTP.

Belongs to the TRAFAC class OBG-HflX-like GTPase superfamily. OBG GTPase family.

It localises to the nucleus. It is found in the nucleolus. May be involved in the ribosome maturation process. In Danio rerio (Zebrafish), this protein is GTP-binding protein 10 (gtpbp10).